Here is a 267-residue protein sequence, read N- to C-terminus: Hydroxyacylglutathione hydrolase (267 aa).

7 residues coordinate Zn(2+): H55, H57, D59, H60, H121, D138, and H176.

This sequence belongs to the metallo-beta-lactamase superfamily. Glyoxalase II family. As to quaternary structure, monomer. Requires Zn(2+) as cofactor.

The enzyme catalyses an S-(2-hydroxyacyl)glutathione + H2O = a 2-hydroxy carboxylate + glutathione + H(+). It functions in the pathway secondary metabolite metabolism; methylglyoxal degradation; (R)-lactate from methylglyoxal: step 2/2. Functionally, thiolesterase that catalyzes the hydrolysis of S-D-lactoyl-glutathione to form glutathione and D-lactic acid. This is Hydroxyacylglutathione hydrolase from Shewanella oneidensis (strain ATCC 700550 / JCM 31522 / CIP 106686 / LMG 19005 / NCIMB 14063 / MR-1).